A 362-amino-acid chain; its full sequence is MRDETPEQPAPLRFGYTTGSCATATSLAAARLLLAGQADDAVEIVLPKGQRVMMRLEFCRATADGAEAGTIKDAGDDPDVTHGALIFARVALAAAPGVRFHAGPGVGTVTRAGLTLPVGEPAINPVPRQMMTTHLEALAAEHGYAGGFDVTIGVEGGEALALKTMNPRLGIVGGLSILGTTGIVRPFSCSAYIASIHQGIDVARANGIAHIAACTGNASEDAMRAHYQLPDMALIEMGDFAGAVLKHLRRAPVARLSMCGGFGKLSKLAAGHLDLHSRHSSIDLPLLAQWAAEAGANEALQAAMRAANTSQEALKLAQADGVPLGDLVCAHALRVARDIVPPSVAVEMFAIDRQGRFVGAAR.

The protein belongs to the CbiD family.

The enzyme catalyses Co-precorrin-5B + S-adenosyl-L-methionine = Co-precorrin-6A + S-adenosyl-L-homocysteine. It participates in cofactor biosynthesis; adenosylcobalamin biosynthesis; cob(II)yrinate a,c-diamide from sirohydrochlorin (anaerobic route): step 6/10. Catalyzes the methylation of C-1 in cobalt-precorrin-5B to form cobalt-precorrin-6A. The sequence is that of Cobalt-precorrin-5B C(1)-methyltransferase from Burkholderia cenocepacia (strain HI2424).